The following is a 544-amino-acid chain: Secreted aspartic protease 9 (544 aa).

The N-terminal stretch at 1–17 is a signal peptide; it reads MRLNSVALLSLVATALA. A disordered region spans residues 31–50; that stretch reads GESKDDLSPEDDSNPRFVKR. The 415-residue stretch at 65–479 folds into the Peptidase A1 domain; the sequence is YMATLKIGSN…DLDDYEVSLA (415 aa). Residue aspartate 83 is part of the active site. 83-85 is a pepstatin A binding site; sequence DTG. Cysteine 98 and cysteine 195 are joined by a disulfide. Asparagine 212, asparagine 240, and asparagine 252 each carry an N-linked (GlcNAc...) asparagine glycan. Aspartate 371 is a catalytic residue. 371–375 serves as a coordination point for pepstatin A; it reads DTGST. The cysteines at positions 406 and 441 are disulfide-linked. Asparagine 422 and asparagine 499 each carry an N-linked (GlcNAc...) asparagine glycan. The disordered stretch occupies residues 500 to 519; sequence SSGSGTTSSSGTSTSTSTRH. Residue serine 520 is the site of GPI-anchor amidated serine attachment. Positions 521–544 are cleaved as a propeptide — removed in mature form; sequence AGSIISKPVYGLLLSLLISCYVLV. The helical transmembrane segment at 524–544 threads the bilayer; it reads IISKPVYGLLLSLLISCYVLV.

It belongs to the peptidase A1 family. As to quaternary structure, monomer. The GPI-anchor is attached to the protein in the endoplasmic reticulum and serves to target the protein to the cell surface. There, the glucosamine-inositol phospholipid moiety is cleaved off and the GPI-modified mannoprotein is covalently attached via its lipidless GPI glycan remnant to the 1,6-beta-glucan of the outer cell wall layer.

The protein localises to the cell membrane. It localises to the secreted. It is found in the cell wall. The catalysed reaction is Preferential cleavage at the carboxyl of hydrophobic amino acids, but fails to cleave 15-Leu-|-Tyr-16, 16-Tyr-|-Leu-17 and 24-Phe-|-Phe-25 of insulin B chain. Activates trypsinogen, and degrades keratin.. Secreted aspartic peptidases (SAPs) are a group of ten acidic hydrolases considered as key virulence factors. These enzymes supply the fungus with nutrient amino acids as well as are able to degrade the selected host's proteins involved in the immune defense. Moreover, acts toward human hemoglobin though limited proteolysis to generate a variety of antimicrobial hemocidins, enabling to compete with the other microorganisms of the same physiological niche using the microbicidal peptides generated from the host protein. In terms of biological role, plays a key role in defense against host by cleaving histatin-5 (Hst 5), a peptide from human saliva that carries out fungicidal activity. The cleavage rate decreases in an order of SAP2 &gt; SAP9 &gt; SAP3 &gt; SAP7 &gt; SAP4 &gt; SAP1 &gt; SAP8. The first cleavage occurs between residues 'Lys-17' and 'His-18' of Hst 5, giving DSHAKRHHGYKRKFHEK and HHSHRGY peptides. Simultaneously, the DSHAKRHHGYKRK peptide is also formed. Further fragmentation by SAP9 results in FHEK product. The chain is Secreted aspartic protease 9 from Candida albicans (strain SC5314 / ATCC MYA-2876) (Yeast).